We begin with the raw amino-acid sequence, 328 residues long: Tryptophan--tRNA ligase (328 aa).

ATP-binding positions include Gln-11 to Thr-13 and Gly-19 to Asn-20. The 'HIGH' region motif lies at Pro-12–Asn-20. Residue Asp-135 coordinates L-tryptophan. ATP is bound by residues Gly-147–Asp-149, Ile-186, and Lys-195–Ser-199. The 'KMSKS' region motif lies at Lys-195–Ser-199.

This sequence belongs to the class-I aminoacyl-tRNA synthetase family. As to quaternary structure, homodimer.

It is found in the cytoplasm. The catalysed reaction is tRNA(Trp) + L-tryptophan + ATP = L-tryptophyl-tRNA(Trp) + AMP + diphosphate + H(+). Functionally, catalyzes the attachment of tryptophan to tRNA(Trp). In Wolinella succinogenes (strain ATCC 29543 / DSM 1740 / CCUG 13145 / JCM 31913 / LMG 7466 / NCTC 11488 / FDC 602W) (Vibrio succinogenes), this protein is Tryptophan--tRNA ligase.